A 273-amino-acid polypeptide reads, in one-letter code: HMP-PP phosphatase (273 aa).

Residue Asp8 is the Nucleophile of the active site. Positions 8, 10, and 212 each coordinate Mg(2+).

It belongs to the HAD-like hydrolase superfamily. Cof family. Requires Mg(2+) as cofactor.

The enzyme catalyses 4-amino-2-methyl-5-(diphosphooxymethyl)pyrimidine + H2O = 4-amino-2-methyl-5-(phosphooxymethyl)pyrimidine + phosphate + H(+). Catalyzes the hydrolysis of 4-amino-2-methyl-5-hydroxymethylpyrimidine pyrophosphate (HMP-PP) to 4-amino-2-methyl-5-hydroxymethylpyrimidine phosphate (HMP-P). The chain is HMP-PP phosphatase from Yersinia pseudotuberculosis serotype I (strain IP32953).